A 431-amino-acid chain; its full sequence is Adenylosuccinate synthetase (431 aa).

GTP-binding positions include 13 to 19 and 41 to 43; these read GDEGKGK and GHT. The active-site Proton acceptor is the aspartate 14. The Mg(2+) site is built by aspartate 14 and glycine 41. Residues 14–17, 39–42, threonine 130, arginine 144, glutamine 225, threonine 240, and arginine 304 each bind IMP; these read DEGK and NAGH. The Proton donor role is filled by histidine 42. 300 to 306 lines the substrate pocket; sequence ATTGRKR. GTP contacts are provided by residues arginine 306, 332-334, and 415-417; these read KLD and STG.

The protein belongs to the adenylosuccinate synthetase family. Homodimer. Requires Mg(2+) as cofactor.

Its subcellular location is the cytoplasm. The enzyme catalyses IMP + L-aspartate + GTP = N(6)-(1,2-dicarboxyethyl)-AMP + GDP + phosphate + 2 H(+). The protein operates within purine metabolism; AMP biosynthesis via de novo pathway; AMP from IMP: step 1/2. Plays an important role in the de novo pathway of purine nucleotide biosynthesis. Catalyzes the first committed step in the biosynthesis of AMP from IMP. The protein is Adenylosuccinate synthetase of Shewanella frigidimarina (strain NCIMB 400).